Reading from the N-terminus, the 62-residue chain is Alpha-conotoxin ViIA (62 aa).

A signal peptide spans 1–18 (MGMRMMFVVFLLVVFASS). Residues 19–45 (VTLDRASYGRYASPVDRASALIAQAIL) constitute a propeptide that is removed on maturation. Intrachain disulfides connect cysteine 48–cysteine 54 and cysteine 49–cysteine 61.

Belongs to the conotoxin A superfamily. The toxin is inactive on the alpha-3-beta-2 nAChR when the disulfide bond connectivity is C1-C4 and C2-C3 (ViIA-I) (IC(50)&gt;10000 nM). As to expression, expressed by the venom duct.

The protein resides in the secreted. Alpha-conotoxins act on postsynaptic membranes, they bind to the nicotinic acetylcholine receptors (nAChR) and thus inhibit them. This toxin selectively inhibits nicotinic acetylcholine receptor (nAChR) alpha-3-beta-2 subtype (IC(50)=845.5 nM). The protein is Alpha-conotoxin ViIA of Conus virgo (Virgin cone).